The following is a 357-amino-acid chain: Sorbitol dehydrogenase 2 (357 aa).

Position 43 (cysteine 43) interacts with Zn(2+). Tyrosine 49 provides a ligand contact to substrate. Histidine 68 and glutamate 69 together coordinate Zn(2+). Position 154 (glutamate 154) interacts with substrate. NAD(+) contacts are provided by residues aspartate 202, lysine 207, 275–277 (VGM), and 299–301 (CFR). The substrate site is built by arginine 301 and tyrosine 302.

The protein belongs to the zinc-containing alcohol dehydrogenase family. As to quaternary structure, homotetramer. Requires Zn(2+) as cofactor.

The enzyme catalyses keto-D-fructose + NADH + H(+) = D-sorbitol + NAD(+). The catalysed reaction is xylitol + NAD(+) = D-xylulose + NADH + H(+). Its function is as follows. Polyol dehydrogenase that catalyzes the reversible NAD(+)-dependent oxidation of various sugar alcohols. Is active with D-sorbitol (D-glucitol) and xylitol as substrates, leading to the C2-oxidized product D-fructose and D-xylulose, respectively. The sequence is that of Sorbitol dehydrogenase 2 (SOR2) from Saccharomyces cerevisiae (strain ATCC 204508 / S288c) (Baker's yeast).